Here is a 691-residue protein sequence, read N- to C-terminus: MSTLQHKTSSARRSSRRSVAAPDFVAVSRIPIVEVSPQLLDGTAPVKSTVDESFPVQATIFREGHDKFAARAVLVDGAGHTVDSVPMCDVSPGLFRFEGWLTPRVPGPHRFFVEAWSDPYATWLHNAEIKVPAGIDVGLVFAEAEVLFKAALKGTPVRSGERAAIRDALTVISKRRALPEVKLAAARSEEVRAAFAAYPVKELVSRSREYPVFVDRVRALVGSWYELFPRSVGATRDSESGEWTSGTLRTAATDLDRVAGMGFDVVYIPPVHPIGLTNRKGRNNSLTAVPGDPGSPYAIGSDAAGGHDAIEPSLGTFEDFDVFVGRAHELGMEVALDLALQCSPDHPWVKEHPEWFTARPDGTIAYAENPPKKYQDIYPLNFDNDPEGIYKEIKRVVELWVAHGVTIFRVDNPHTKPVGFWQRLLAEFRVEHPEVIFLAEAFTNPPMMQTLGTVGFHQSYTYFTWRNERQEIEEYLMEVSHESSHRMRPAFWPTTHDILTPYIQRGGISAAAIRAILAATGSPTWGIYNGYELIENIARPGAEEHIDNEKYEFKPRNYALAEQNGMATLLTMLNSIRSKHKALQRLRNVTINPTSNDKIVSFTKVARPEETADGVMDAVIVVVNLDPYASRDATVYLDLSPFGISPRWDGGPIIEVTDEMSGETYLWNEAPYVHLDPHGQVAHVLSVKVLS.

3 residues coordinate alpha-maltose 1-phosphate: K280, Q341, and D376. D411 functions as the Nucleophile in the catalytic mechanism. Alpha-maltose 1-phosphate is bound at residue N412. E440 serves as the catalytic Proton donor. Residue 550–551 (KY) participates in alpha-maltose 1-phosphate binding.

It belongs to the glycosyl hydrolase 13 family. GlgE subfamily. In terms of assembly, homodimer.

The catalysed reaction is alpha-maltose 1-phosphate + [(1-&gt;4)-alpha-D-glucosyl](n) = [(1-&gt;4)-alpha-D-glucosyl](n+2) + phosphate. In terms of biological role, maltosyltransferase that uses maltose 1-phosphate (M1P) as the sugar donor to elongate linear or branched alpha-(1-&gt;4)-glucans. Is involved in a branched alpha-glucan biosynthetic pathway from trehalose, together with TreS, Mak and GlgB. The sequence is that of Alpha-1,4-glucan:maltose-1-phosphate maltosyltransferase from Arcanobacterium haemolyticum (strain ATCC 9345 / DSM 20595 / CCM 5947 / CCUG 17215 / LMG 16163 / NBRC 15585 / NCTC 8452 / 11018).